Here is a 735-residue protein sequence, read N- to C-terminus: DNA ligase 1 (735 aa).

Over residues 1 to 11 the composition is skewed to basic and acidic residues; it reads MAGDKQGDKQA. Residues 1 to 23 are disordered; the sequence is MAGDKQGDKQAETTSVPAEARER. Residues 48–52, 97–98, and E128 contribute to the NAD(+) site; these read DAEFD and SL. The active-site N6-AMP-lysine intermediate is K130. The NAD(+) site is built by R151, E188, K305, and K329. Zn(2+) is bound by residues C423, C426, C442, and C448. Residues 643–732 form the BRCT domain; the sequence is EGPRPLEGLT…PEAAADVALS (90 aa).

It belongs to the NAD-dependent DNA ligase family. LigA subfamily. The cofactor is Mg(2+). Requires Mn(2+) as cofactor.

It carries out the reaction NAD(+) + (deoxyribonucleotide)n-3'-hydroxyl + 5'-phospho-(deoxyribonucleotide)m = (deoxyribonucleotide)n+m + AMP + beta-nicotinamide D-nucleotide.. Its function is as follows. DNA ligase that catalyzes the formation of phosphodiester linkages between 5'-phosphoryl and 3'-hydroxyl groups in double-stranded DNA using NAD as a coenzyme and as the energy source for the reaction. It is essential for DNA replication and repair of damaged DNA. The sequence is that of DNA ligase 1 from Streptomyces coelicolor (strain ATCC BAA-471 / A3(2) / M145).